A 923-amino-acid chain; its full sequence is Neuropilin-1 (923 aa).

The signal sequence occupies residues 1–21; that stretch reads MERGLPLLCATLALALALAGA. Over 22–856 the chain is Extracellular; the sequence is FRSDKCGGTI…PGNVLKTLDP (835 aa). Disulfide bonds link C27–C54, C82–C104, and C147–C173. CUB domains follow at residues 27–141 and 147–265; these read CGGT…YEIF and CSQN…YSVL. N150 carries an N-linked (GlcNAc...) asparagine glycan. The Ca(2+) site is built by E195, D209, and D250. C206 and C228 are joined by a disulfide. Residues N261, N300, and N522 are each glycosylated (N-linked (GlcNAc...) asparagine). 2 disulfides stabilise this stretch: C275-C424 and C431-C583. F5/8 type C domains lie at 275-424 and 431-583; these read CMEA…VYGC and CSGM…LLGC. S612 carries O-linked (Xyl...) (chondroitin sulfate) serine; alternate glycosylation. S612 is a glycosylation site (O-linked (Xyl...) (heparan sulfate) serine; alternate). Positions 645 to 811 constitute an MAM domain; that stretch reads TYGFNCEFGW…NHISQEDCAK (167 aa). The tract at residues 820 to 845 is disordered; it reads TEIKIDETGSTPGYEGEGEGDKNISR. A glycan (O-linked (Xyl...) (chondroitin sulfate) serine) is linked at S829. N842 carries N-linked (GlcNAc...) asparagine glycosylation. Residues 857–879 traverse the membrane as a helical segment; sequence ILITIIAMSALGVLLGAVCGVVL. The Cytoplasmic segment spans residues 880–923; it reads YCACWHNGMSERNLSALENYNFELVDGVKLKKDKLNPQSNYSEA. S894 carries the post-translational modification Phosphoserine.

The protein belongs to the neuropilin family. As to quaternary structure, homodimer, and heterodimer with NRP2. Binds PLXNB1. Interacts with FER. Interacts with VEGFA. Interacts with ABCB8/MITOSUR in mitochondria. Nervous system.

Its subcellular location is the mitochondrion membrane. The protein resides in the cell membrane. The protein localises to the cytoplasm. Receptor involved in the development of the cardiovascular system, in angiogenesis, in the formation of certain neuronal circuits and in organogenesis outside the nervous system. Mediates the chemorepulsant activity of semaphorins. Recognizes a C-end rule (CendR) motif R/KXXR/K on its ligands which causes cellular internalization and vascular leakage. Binds to semaphorin 3A (SEMA3A), the PLGF-2 isoform of PGF, the VEGF165 isoform of VEGFA and VEGFB. Coexpression with KDR results in increased VEGF165 binding to KDR as well as increased chemotaxis. Regulates VEGF-induced angiogenesis. Binding to VEGFA initiates a signaling pathway needed for motor neuron axon guidance and cell body migration, including for the caudal migration of facial motor neurons from rhombomere 4 to rhombomere 6 during embryonic development. Regulates mitochondrial iron transport via interaction with ABCB8/MITOSUR. The protein is Neuropilin-1 of Mus musculus (Mouse).